The chain runs to 283 residues: Pre-mRNA-splicing factor CWC23 (283 aa).

In terms of domain architecture, J spans 15-87; sequence NLYDVLELPT…DVRPHYDRWL (73 aa).

This sequence belongs to the DnaJ family. In terms of assembly, belongs to the CWC complex (or CEF1-associated complex), a spliceosome sub-complex reminiscent of a late-stage spliceosome composed of the U2, U5 and U6 snRNAs and at least BUD13, BUD31, BRR2, CDC40, CEF1, CLF1, CUS1, CWC2, CWC15, CWC21, CWC22, CWC23, CWC24, CWC25, CWC27, ECM2, HSH155, IST3, ISY1, LEA1, MSL1, NTC20, PRP8, PRP9, PRP11, PRP19, PRP21, PRP22, PRP45, PRP46, SLU7, SMB1, SMD1, SMD2, SMD3, SMX2, SMX3, SNT309, SNU114, SPP2, SYF1, SYF2, RSE1 and YJU2.

It is found in the cytoplasm. The protein localises to the nucleus. In terms of biological role, involved in pre-mRNA splicing. May be involved in endoplasmic reticulum-associated protein degradation (ERAD) and required for growth at low and high temperatures. This chain is Pre-mRNA-splicing factor CWC23 (CWC23), found in Saccharomyces cerevisiae (strain ATCC 204508 / S288c) (Baker's yeast).